We begin with the raw amino-acid sequence, 332 residues long: Anthranilate phosphoribosyltransferase (332 aa).

5-phospho-alpha-D-ribose 1-diphosphate-binding positions include G78, 81–82 (GD), S86, 88–91 (NIST), 106–114 (KHGNKSITS), and S118. G78 contacts anthranilate. S90 is a binding site for Mg(2+). N109 provides a ligand contact to anthranilate. Residue R163 participates in anthranilate binding. Residues D222 and E223 each coordinate Mg(2+).

It belongs to the anthranilate phosphoribosyltransferase family. In terms of assembly, homodimer. The cofactor is Mg(2+).

It carries out the reaction N-(5-phospho-beta-D-ribosyl)anthranilate + diphosphate = 5-phospho-alpha-D-ribose 1-diphosphate + anthranilate. It functions in the pathway amino-acid biosynthesis; L-tryptophan biosynthesis; L-tryptophan from chorismate: step 2/5. In terms of biological role, catalyzes the transfer of the phosphoribosyl group of 5-phosphorylribose-1-pyrophosphate (PRPP) to anthranilate to yield N-(5'-phosphoribosyl)-anthranilate (PRA). The polypeptide is Anthranilate phosphoribosyltransferase (Staphylococcus aureus (strain Mu3 / ATCC 700698)).